The primary structure comprises 374 residues: Phospho-N-acetylmuramoyl-pentapeptide-transferase (374 aa).

The next 10 membrane-spanning stretches (helical) occupy residues 3–23 (AVIVAVGVAFLVSLFCTPIAI), 52–72 (MGGVVFILATVIAYVAGHLAL), 85–105 (PTITALVLLGLMVFSGAVGFI), 125–145 (LLGQILVGAVFGVIALYFPST), 170–190 (IPALELTKVGAVVLFIFVVMA), 201–221 (LDGLATGASVMVLAAYALIAF), 244–264 (PLEIALIAGAAAGACVGFLWW), 271–291 (IFMGDTGALGLGGLIAGMAMS), 294–314 (TILLLPIIGGLFVIITMSVVI), and 350–370 (FWIIAGIGVAIALGLFYSEFL).

The protein belongs to the glycosyltransferase 4 family. MraY subfamily. Requires Mg(2+) as cofactor.

Its subcellular location is the cell membrane. The catalysed reaction is UDP-N-acetyl-alpha-D-muramoyl-L-alanyl-gamma-D-glutamyl-meso-2,6-diaminopimeloyl-D-alanyl-D-alanine + di-trans,octa-cis-undecaprenyl phosphate = di-trans,octa-cis-undecaprenyl diphospho-N-acetyl-alpha-D-muramoyl-L-alanyl-D-glutamyl-meso-2,6-diaminopimeloyl-D-alanyl-D-alanine + UMP. The protein operates within cell wall biogenesis; peptidoglycan biosynthesis. Its function is as follows. Catalyzes the initial step of the lipid cycle reactions in the biosynthesis of the cell wall peptidoglycan: transfers peptidoglycan precursor phospho-MurNAc-pentapeptide from UDP-MurNAc-pentapeptide onto the lipid carrier undecaprenyl phosphate, yielding undecaprenyl-pyrophosphoryl-MurNAc-pentapeptide, known as lipid I. The sequence is that of Phospho-N-acetylmuramoyl-pentapeptide-transferase from Salinispora arenicola (strain CNS-205).